The chain runs to 338 residues: UDP-3-O-acylglucosamine N-acyltransferase (338 aa).

The active-site Proton acceptor is H239.

This sequence belongs to the transferase hexapeptide repeat family. LpxD subfamily. As to quaternary structure, homotrimer.

It carries out the reaction a UDP-3-O-[(3R)-3-hydroxyacyl]-alpha-D-glucosamine + a (3R)-hydroxyacyl-[ACP] = a UDP-2-N,3-O-bis[(3R)-3-hydroxyacyl]-alpha-D-glucosamine + holo-[ACP] + H(+). The protein operates within bacterial outer membrane biogenesis; LPS lipid A biosynthesis. Catalyzes the N-acylation of UDP-3-O-acylglucosamine using 3-hydroxyacyl-ACP as the acyl donor. Is involved in the biosynthesis of lipid A, a phosphorylated glycolipid that anchors the lipopolysaccharide to the outer membrane of the cell. This is UDP-3-O-acylglucosamine N-acyltransferase from Xylella fastidiosa (strain 9a5c).